We begin with the raw amino-acid sequence, 796 residues long: Kinesin-like protein KIF3C (796 aa).

The Kinesin motor domain occupies 10-367; the sequence is ALKVVARCRP…LRFANRAKNI (358 aa). 97 to 104 contacts ATP; that stretch reads GQTGTGKT. Disordered stretches follow at residues 251-292, 397-421, and 754-796; these read ERQN…PKEA, EKKGMLGKRPRRKSSRRKKAVSAPA, and PSTS…VDHD. Residues 270–284 show a composition bias toward gly residues; that stretch reads AGGGGGGGGTSGSGS. Residues 378-632 are a coiled coil; the sequence is KDTLLREFQE…NEQTRELKLK (255 aa). Over residues 401–416 the composition is skewed to basic residues; sequence MLGKRPRRKSSRRKKA. The globular stretch occupies residues 633 to 793; the sequence is YLIIENFIPP…SAPLHPATVV (161 aa).

The protein belongs to the TRAFAC class myosin-kinesin ATPase superfamily. Kinesin family. Kinesin II subfamily. As to quaternary structure, heterodimer of KIF3A and KIF3C.

It is found in the cytoplasm. It localises to the cytoskeleton. Microtubule-based anterograde translocator for membranous organelles. This is Kinesin-like protein KIF3C (Kif3c) from Rattus norvegicus (Rat).